Reading from the N-terminus, the 138-residue chain is Actophorin (138 aa).

The region spanning 3-134 (GIQLADEVTS…NLDEVIAKVK (132 aa)) is the ADF-H domain.

It belongs to the actin-binding proteins ADF family. Interacts with F-actin. Does not interact with G-actin. Interacts with 14-3-3 protein 3.

It is found in the cytoplasm. It localises to the cytoskeleton. Its subcellular location is the cell membrane. The protein localises to the cell projection. The protein resides in the phagocytic cup. It is found in the pseudopodium. In terms of biological role, actin-binding protein that severs actin filaments. This Entamoeba histolytica (strain ATCC 30459 / HM-1:IMSS / ABRM) protein is Actophorin.